A 407-amino-acid chain; its full sequence is SERPINE1 mRNA-binding protein 1 (407 aa).

A Phosphoserine modification is found at serine 25. A disordered region spans residues 33-227 (AAENKKKEAG…GSGSHNWGTV (195 aa)). Over residues 51–68 (AKSAAQAAAQTNSNAAGK) the composition is skewed to low complexity. An N6-acetyllysine; alternate modification is found at lysine 52. Residue lysine 52 forms a Glycyl lysine isopeptide (Lys-Gly) (interchain with G-Cter in SUMO1); alternate linkage. Lysine 68 is subject to N6-acetyllysine. 3 stretches are compositionally biased toward basic and acidic residues: residues 70 to 80 (LRKESQKDRKN), 89 to 114 (ADKK…RRPD), and 122 to 162 (KLID…ERPI). Lysine 102 participates in a covalent cross-link: Glycyl lysine isopeptide (Lys-Gly) (interchain with G-Cter in SUMO2). Lysine 122 and lysine 140 each carry N6-acetyllysine. The span at 164–182 (GRGGLGRGRGGRGRGMGRG) shows a compositional bias: gly residues. Residues arginine 165 and arginine 188 each carry the omega-N-methylarginine modification. A compositionally biased stretch (basic and acidic residues) spans 183-199 (DGFDSRGKREFDRHSGS). A phosphoserine mark is found at serine 197, serine 199, serine 203, serine 205, and serine 208. Lysine 211 is modified (N6-acetyllysine; alternate). Lysine 211 is covalently cross-linked (Glycyl lysine isopeptide (Lys-Gly) (interchain with G-Cter in SUMO2); alternate). Arginine 216 bears the Omega-N-methylarginine mark. Serine 221 bears the Phosphoserine mark. A Phosphothreonine modification is found at threonine 226. A Glycyl lysine isopeptide (Lys-Gly) (interchain with G-Cter in SUMO1); alternate cross-link involves residue lysine 228. Lysine 228 is covalently cross-linked (Glycyl lysine isopeptide (Lys-Gly) (interchain with G-Cter in SUMO2); alternate). A phosphoserine mark is found at leucine 231, serine 234, and tyrosine 237. Position 234 is a phosphothreonine (serine 234). A Phosphothreonine modification is found at lysine 240. The segment covering 242–256 (ISYNCSDLDQSNVTE) has biased composition (polar residues). Disordered stretches follow at residues 242–288 (ISYN…KEMT) and 327–407 (SKSE…PALA). Residues 261–274 (GEEHPVADTENKEN) are compositionally biased toward basic and acidic residues. Lysine 280 is covalently cross-linked (Glycyl lysine isopeptide (Lys-Gly) (interchain with G-Cter in SUMO2)). Over residues 327-341 (SKSEEAHAEDSVMDH) the composition is skewed to basic and acidic residues. The residue at position 328 (lysine 328) is an N6-acetyllysine. Phosphoserine is present on serine 329. A compositionally biased stretch (gly residues) spans 362-371 (GRPGRGGRGG). An omega-N-methylarginine mark is found at arginine 363, arginine 366, and arginine 369. Phosphoserine is present on residues serine 391 and serine 393.

It belongs to the SERBP1-HABP4 family. Associates with mature 80S ribosomes. Interacts with EEF2/eEF2; interaction sequesters EEF2/eEF2 at the A-site of the ribosome, thereby blocking the interaction sites of the mRNA-tRNA complex, promoting ribosome stabilization and hibernation. Interacts with SPIN1. Interacts with CHD3 and TDRD3. Interacts with ZDHHC17 (via ANK repeats). In terms of processing, phosphorylation by MTOR inhibits SERBP1 and relieves ribosome hibernation.

It is found in the cytoplasm. The protein resides in the nucleus. Its subcellular location is the perinuclear region. Its function is as follows. Ribosome-binding protein that promotes ribosome hibernation, a process during which ribosomes are stabilized in an inactive state and preserved from proteasomal degradation. Acts via its association with EEF2/eEF2 factor, sequestering EEF2/eEF2 at the A-site of the ribosome and promoting ribosome stabilization and storage in an inactive state. May also play a role in the regulation of mRNA stability: binds to the 3'-most 134 nt of the SERPINE1/PAI1 mRNA, a region which confers cyclic nucleotide regulation of message decay. Seems to play a role in PML-nuclear bodies formation. The sequence is that of SERPINE1 mRNA-binding protein 1 from Mus musculus (Mouse).